A 333-amino-acid polypeptide reads, in one-letter code: Holliday junction branch migration complex subunit RuvB (333 aa).

The tract at residues 1 to 182 (MDERLLSGES…FGVLSRLEYY (182 aa)) is large ATPase domain (RuvB-L). Residues L21, R22, G63, K66, T67, T68, 129–131 (EDF), R172, Y182, and R219 contribute to the ATP site. T67 is a Mg(2+) binding site. Residues 183 to 253 (TVDQLSAIVE…ITQMALELLQ (71 aa)) are small ATPAse domain (RuvB-S). Positions 256-333 (KLGLDHIDHK…EHFGMEMPKV (78 aa)) are head domain (RuvB-H). Residues R311 and R316 each coordinate DNA.

This sequence belongs to the RuvB family. Homohexamer. Forms an RuvA(8)-RuvB(12)-Holliday junction (HJ) complex. HJ DNA is sandwiched between 2 RuvA tetramers; dsDNA enters through RuvA and exits via RuvB. An RuvB hexamer assembles on each DNA strand where it exits the tetramer. Each RuvB hexamer is contacted by two RuvA subunits (via domain III) on 2 adjacent RuvB subunits; this complex drives branch migration. In the full resolvosome a probable DNA-RuvA(4)-RuvB(12)-RuvC(2) complex forms which resolves the HJ.

Its subcellular location is the cytoplasm. The catalysed reaction is ATP + H2O = ADP + phosphate + H(+). The RuvA-RuvB-RuvC complex processes Holliday junction (HJ) DNA during genetic recombination and DNA repair, while the RuvA-RuvB complex plays an important role in the rescue of blocked DNA replication forks via replication fork reversal (RFR). RuvA specifically binds to HJ cruciform DNA, conferring on it an open structure. The RuvB hexamer acts as an ATP-dependent pump, pulling dsDNA into and through the RuvAB complex. RuvB forms 2 homohexamers on either side of HJ DNA bound by 1 or 2 RuvA tetramers; 4 subunits per hexamer contact DNA at a time. Coordinated motions by a converter formed by DNA-disengaged RuvB subunits stimulates ATP hydrolysis and nucleotide exchange. Immobilization of the converter enables RuvB to convert the ATP-contained energy into a lever motion, pulling 2 nucleotides of DNA out of the RuvA tetramer per ATP hydrolyzed, thus driving DNA branch migration. The RuvB motors rotate together with the DNA substrate, which together with the progressing nucleotide cycle form the mechanistic basis for DNA recombination by continuous HJ branch migration. Branch migration allows RuvC to scan DNA until it finds its consensus sequence, where it cleaves and resolves cruciform DNA. In Bacillus cereus (strain 03BB102), this protein is Holliday junction branch migration complex subunit RuvB.